Consider the following 390-residue polypeptide: Na(+)/H(+) antiporter NhaA 2 (390 aa).

The next 11 membrane-spanning stretches (helical) occupy residues Ile23–Ala43, Leu63–Ile83, Leu100–Thr120, Gly129–Gly149, Leu158–Phe178, Ser181–Val201, Ala208–Ile228, Gly265–Phe285, Leu293–Val313, Leu331–Leu351, and Glu362–Leu382.

The protein belongs to the NhaA Na(+)/H(+) (TC 2.A.33) antiporter family.

Its subcellular location is the cell inner membrane. It carries out the reaction Na(+)(in) + 2 H(+)(out) = Na(+)(out) + 2 H(+)(in). In terms of biological role, na(+)/H(+) antiporter that extrudes sodium in exchange for external protons. This chain is Na(+)/H(+) antiporter NhaA 2, found in Novosphingobium aromaticivorans (strain ATCC 700278 / DSM 12444 / CCUG 56034 / CIP 105152 / NBRC 16084 / F199).